A 294-amino-acid chain; its full sequence is 4-hydroxy-tetrahydrodipicolinate synthase (294 aa).

T47 provides a ligand contact to pyruvate. Residue Y135 is the Proton donor/acceptor of the active site. The active-site Schiff-base intermediate with substrate is the K163. Residue I206 coordinates pyruvate.

The protein belongs to the DapA family. Homodimer.

It localises to the cytoplasm. It catalyses the reaction L-aspartate 4-semialdehyde + pyruvate = (2S,4S)-4-hydroxy-2,3,4,5-tetrahydrodipicolinate + H2O + H(+). It functions in the pathway amino-acid biosynthesis; L-lysine biosynthesis via DAP pathway; (S)-tetrahydrodipicolinate from L-aspartate: step 3/4. Its function is as follows. Catalyzes the condensation of (S)-aspartate-beta-semialdehyde [(S)-ASA] and pyruvate to 4-hydroxy-tetrahydrodipicolinate (HTPA). This is 4-hydroxy-tetrahydrodipicolinate synthase from Staphylococcus haemolyticus (strain JCSC1435).